Reading from the N-terminus, the 141-residue chain is Large-conductance mechanosensitive channel (141 aa).

3 consecutive transmembrane segments (helical) span residues 14–34 (VMDLAVGVIIGGAFGGIVKSL), 38–58 (IIMPIVGAIFGGFDFSNYFLG), and 81–101 (GSFITVLINFLILAWIIFLMV).

This sequence belongs to the MscL family. As to quaternary structure, homopentamer.

The protein localises to the cell inner membrane. Functionally, channel that opens in response to stretch forces in the membrane lipid bilayer. May participate in the regulation of osmotic pressure changes within the cell. The sequence is that of Large-conductance mechanosensitive channel from Rhizobium rhizogenes (strain K84 / ATCC BAA-868) (Agrobacterium radiobacter).